Consider the following 1117-residue polypeptide: Cytospin-A (1117 aa).

Disordered regions lie at residues 1 to 176 (MKKA…NQIS), 293 to 323 (SLSP…GSVE), and 358 to 390 (SSDD…NASE). Residues 45–90 (TAASLSKTKSSDDLLAGMAGGVTVTNGVKGKKSTCPSAAPSASAPA) are compositionally biased toward low complexity. The segment covering 93–117 (TVENKSKISTGTASSTKRSTSTGNK) has biased composition (polar residues). 2 stretches are compositionally biased toward basic and acidic residues: residues 120 to 131 (SSTRERLRERTR) and 158 to 171 (TATE…KSKS). A coiled-coil region spans residues 168 to 280 (KSKSDNQISD…LNALGFSLEQ (113 aa)). The segment covering 293–303 (SLSPEITPGNQ) has biased composition (polar residues). The span at 358-377 (SSDDALDAPSSSESEGIPSI) shows a compositional bias: low complexity. Residues Ser-384, Ser-385, and Ser-389 each carry the phosphoserine modification. 2 coiled-coil regions span residues 394-449 (ACLT…MESL) and 487-807 (RYME…RGRV). Phosphoserine is present on residues Ser-868, Ser-881, and Ser-887. The interval 920–997 (TSSASRPASL…PTTRSRIREE (78 aa)) is disordered. Basic and acidic residues predominate over residues 946–956 (RSSEEVKRDIS). Residues 971–990 (TTSPQLSLSSSPTASVTPTT) show a composition bias toward low complexity. The region spanning 1011-1116 (GSKRNALLKW…YVTAIYKYFE (106 aa)) is the Calponin-homology (CH) domain.

Belongs to the cytospin-A family. May interact with both microtubules and actin cytoskeleton.

Its subcellular location is the cytoplasm. It is found in the cytoskeleton. The protein localises to the spindle. It localises to the cell junction. The protein resides in the gap junction. In terms of biological role, involved in cytokinesis and spindle organization. May play a role in actin cytoskeleton organization and microtubule stabilization and hence required for proper cell adhesion and migration. The protein is Cytospin-A (SPECC1L) of Homo sapiens (Human).